The primary structure comprises 163 residues: Bacterial microcompartment assembly protein PduM (163 aa).

Belongs to the PduM family. In terms of assembly, interacts with shell protein PduK.

The protein resides in the bacterial microcompartment. It functions in the pathway polyol metabolism; 1,2-propanediol degradation. In terms of biological role, plays an essential role in assembly and/or stability of the bacterial microcompartment (BMC) dedicated to 1,2-propanediol (1,2-PD) degradation. Functionally, expression of a cosmid containing the full 21-gene pdu operon in E.coli allows E.coli to grow on 1,2-propanediol (1,2-PD) with the appearance of bacterial microcompartments (BMC) in its cytoplasm. The 1,2-PD-specific bacterial microcompartment (BMC) concentrates low levels of 1,2-PD catabolic enzymes, concentrates volatile reaction intermediates thus enhancing pathway flux and keeps the level of toxic, mutagenic propionaldehyde low. The sequence is that of Bacterial microcompartment assembly protein PduM from Citrobacter freundii.